We begin with the raw amino-acid sequence, 690 residues long: MSSKGDLSKCRNIGIMAHIDAGKTTTTERILFYTGKQNRIGEVHEGAASMDWMEQEKERGITITSAATTCFWNGCRINIIDTPGHVDFTVEVERSLRVLDGAVAVFDGVAGVEPQSETVWRQADRYDVPRICFVNKMDRVGADFYTCVDMIVDRLGAVPLVLQLPIGVDKGFVGVVDLVEMRSIIWEEDSLGAKFHYGDIPEGMLEEANKYRSKLVETAVEVDDEAMSMYLDGQDISVSLLKKCIRAGVIGSNFVPVLCGSAFKNKGVQPLLDAVVDYLPSPNDIPTIEGVSAKDPDQVMQITTSEDGKFVALAFKVMVDRFVGSLTFVRVYSGKLTGKSVVLNSSKGHTESVGRILLMHANNREDISEVKAGDIAALAGLKKTTTGDTLCDQNFPVILEKMDFPESVMELAIEPVSTADQEKMGMALSRLVAEDPSLKVFVNNESGQTILKGMGELHLEIIVDRMRREFGVEASVGAPQVAYRETITKAAEVEYIHKKQTGGAGQFAKVNILFEPLPPGSGFEFENKITCGAIPKEYIPGIQNGLELIKETGIIAGFPLIDFKATLFDGAFHEVDSSPLAFELAAKGAFREMASKAAPVLLEPIMRVEIITPDEYMGDVIGDINSRRGKVSEMQDRHNAKLITAFIPLSSMFGYVKDLRSMSQGRAQYSMFFARYERVPENVVVNDVKR.

The tr-type G domain occupies 8–283 (SKCRNIGIMA…AVVDYLPSPN (276 aa)). Residues 17-24 (AHIDAGKT), 81-85 (DTPGH), and 135-138 (NKMD) contribute to the GTP site.

Belongs to the TRAFAC class translation factor GTPase superfamily. Classic translation factor GTPase family. EF-G/EF-2 subfamily.

It localises to the cytoplasm. Catalyzes the GTP-dependent ribosomal translocation step during translation elongation. During this step, the ribosome changes from the pre-translocational (PRE) to the post-translocational (POST) state as the newly formed A-site-bound peptidyl-tRNA and P-site-bound deacylated tRNA move to the P and E sites, respectively. Catalyzes the coordinated movement of the two tRNA molecules, the mRNA and conformational changes in the ribosome. In Anaplasma phagocytophilum (strain HZ), this protein is Elongation factor G.